A 99-amino-acid chain; its full sequence is MSITGQPHVYKKDTIIRLKPLSLNSNNRSYVLVPQKGNIQNIINHLNNLNEIVGRSLLGIWKINSYFGLSKDPSESKSKNPSVFNTAKTIFKSGGVDYS.

It belongs to the caulimoviridae ORF II family.

In terms of biological role, this protein is involved in virus transmission. In Cauliflower mosaic virus (strain W260) (CaMV), this protein is Aphid transmission protein.